The primary structure comprises 704 residues: Polyribonucleotide nucleotidyltransferase (704 aa).

Asp-487 and Asp-493 together coordinate Mg(2+). The KH domain maps to 554–613; sequence PRLLTIKIHPDKIREVIGKGGSTIQAITKETGTQIDIQDDGTIIIASVNAIAAQAAKSRI. The region spanning 623-691 is the S1 motif domain; sequence GRIYEGKVAK…KQGRIRLSIK (69 aa).

It belongs to the polyribonucleotide nucleotidyltransferase family. In terms of assembly, component of the RNA degradosome, which is a multiprotein complex involved in RNA processing and mRNA degradation. It depends on Mg(2+) as a cofactor.

Its subcellular location is the cytoplasm. The catalysed reaction is RNA(n+1) + phosphate = RNA(n) + a ribonucleoside 5'-diphosphate. Involved in mRNA degradation. Catalyzes the phosphorolysis of single-stranded polyribonucleotides processively in the 3'- to 5'-direction. In Xanthomonas axonopodis pv. citri (strain 306), this protein is Polyribonucleotide nucleotidyltransferase.